We begin with the raw amino-acid sequence, 267 residues long: Interleukin-1 beta (267 aa).

Positions 1 to 114 (MAIVPEPAKE…ETCNDDFVCD (114 aa)) are excised as a propeptide.

Belongs to the IL-1 family. (Microbial infection) Interacts with African swine fever virus (ASFV) protein L83L. As to quaternary structure, monomer. In its precursor form, weakly interacts with full-length MEFV; the mature cytokine does not interact at all. Interacts with integrins ITGAV:ITGBV and ITGA5:ITGB1; integrin-binding is required for IL1B signaling. Interacts with cargo receptor TMED10; the interaction is direct and is required for the secretion of IL1B mature form. Interacts with HSP90AB1; the interaction facilitates cargo translocation into the ERGIC. Interacts with HSP90B1; the interaction facilitates cargo translocation into the ERGIC.

The protein localises to the cytoplasm. Its subcellular location is the cytosol. It is found in the secreted. It localises to the lysosome. The protein resides in the extracellular exosome. In terms of biological role, potent pro-inflammatory cytokine. Initially discovered as the major endogenous pyrogen, induces prostaglandin synthesis, neutrophil influx and activation, T-cell activation and cytokine production, B-cell activation and antibody production, and fibroblast proliferation and collagen production. Promotes Th17 differentiation of T-cells. Synergizes with IL12/interleukin-12 to induce IFNG synthesis from T-helper 1 (Th1) cells. Plays a role in angiogenesis by inducing VEGF production synergistically with TNF and IL6. Involved in transduction of inflammation downstream of pyroptosis: its mature form is specifically released in the extracellular milieu by passing through the gasdermin-D (GSDMD) pore. In Sus scrofa (Pig), this protein is Interleukin-1 beta (IL1B).